The chain runs to 396 residues: Phosphoglycerate kinase (396 aa).

Substrate contacts are provided by residues 21 to 23, R36, 59 to 62, R118, and R151; these read DFN and HLGR. Residues K201, G292, E323, and 349–352 each bind ATP; that span reads GGDS.

This sequence belongs to the phosphoglycerate kinase family. Monomer.

The protein resides in the cytoplasm. The enzyme catalyses (2R)-3-phosphoglycerate + ATP = (2R)-3-phospho-glyceroyl phosphate + ADP. It participates in carbohydrate degradation; glycolysis; pyruvate from D-glyceraldehyde 3-phosphate: step 2/5. This chain is Phosphoglycerate kinase, found in Leptospira borgpetersenii serovar Hardjo-bovis (strain L550).